Reading from the N-terminus, the 190-residue chain is Venom nerve growth factor (190 aa).

The N-terminal stretch at 1–7 is a signal peptide; that stretch reads FLIGIWA. The propeptide occupies 8-111; it reads APKSEDNVPL…SLNRNIRAKR (104 aa). Cys-125 and Cys-190 are disulfide-bonded. N-linked (GlcNAc...) asparagine glycosylation is present at Asn-134.

Belongs to the NGF-beta family. Homodimer; non-covalently linked. In terms of processing, glycosylated. In terms of tissue distribution, expressed by the venom gland.

The protein resides in the secreted. In terms of biological role, nerve growth factor is important for the development and maintenance of the sympathetic and sensory nervous systems. It stimulates division and differentiation of sympathetic and embryonic sensory neurons as well as basal forebrain cholinergic neurons in the brain. Its relevance in the snake venom is not clear. However, it has been shown to inhibit metalloproteinase-dependent proteolysis of platelet glycoprotein Ib alpha, suggesting a metalloproteinase inhibition to prevent metalloprotease autodigestion and/or protection against prey proteases. Binds a lipid between the two protein chains in the homodimer. The lipid-bound form promotes histamine relase from mouse mast cells, contrary to the lipid-free form. This Agkistrodon contortrix contortrix (Southern copperhead) protein is Venom nerve growth factor.